The following is a 199-amino-acid chain: MKKVLVINSSVSQLNNSDSLAMSNMFIEEYKKMNPNDEIINLDLNETKMSQKTLTRNNIAEYFNQEDSFDFIEQLKSVDKIVLNFSMVNWGIPAILKNYIDHITIANLTFTYKGSTDGNAIGLLSNIQDVQILATKGGTGTPNSAFTEYVKNIWEFLGAKVKSEIIINEMMDIPPYAEQSPIENLEKVKEQILKAAKNF.

FMN contacts are provided by residues serine 10, 17-19 (SDS), and 135-138 (TKGG).

This sequence belongs to the azoreductase type 1 family. As to quaternary structure, homodimer. It depends on FMN as a cofactor.

It catalyses the reaction 2 a quinone + NADH + H(+) = 2 a 1,4-benzosemiquinone + NAD(+). The enzyme catalyses N,N-dimethyl-1,4-phenylenediamine + anthranilate + 2 NAD(+) = 2-(4-dimethylaminophenyl)diazenylbenzoate + 2 NADH + 2 H(+). Functionally, quinone reductase that provides resistance to thiol-specific stress caused by electrophilic quinones. Also exhibits azoreductase activity. Catalyzes the reductive cleavage of the azo bond in aromatic azo compounds to the corresponding amines. The polypeptide is FMN-dependent NADH:quinone oxidoreductase 2 (Mesoplasma florum (strain ATCC 33453 / NBRC 100688 / NCTC 11704 / L1) (Acholeplasma florum)).